Consider the following 347-residue polypeptide: Methionine import ATP-binding protein MetN (347 aa).

One can recognise an ABC transporter domain in the interval isoleucine 2 to phenylalanine 247. Glycine 38–serine 45 lines the ATP pocket.

This sequence belongs to the ABC transporter superfamily. Methionine importer (TC 3.A.1.24) family. As to quaternary structure, the complex is composed of two ATP-binding proteins (MetN), two transmembrane proteins (MetI) and a solute-binding protein (MetQ).

The protein localises to the cell membrane. It carries out the reaction L-methionine(out) + ATP + H2O = L-methionine(in) + ADP + phosphate + H(+). The enzyme catalyses D-methionine(out) + ATP + H2O = D-methionine(in) + ADP + phosphate + H(+). In terms of biological role, part of the ABC transporter complex MetNIQ involved in methionine import. Responsible for energy coupling to the transport system. The polypeptide is Methionine import ATP-binding protein MetN (Streptomyces avermitilis (strain ATCC 31267 / DSM 46492 / JCM 5070 / NBRC 14893 / NCIMB 12804 / NRRL 8165 / MA-4680)).